Consider the following 634-residue polypeptide: Growth hormone receptor (634 aa).

The signal sequence occupies residues 1-18 (MDLWQLLLTLAVAGSSDA). Topologically, residues 19-260 (FSGSEATPAF…NPSACEEDFQ (242 aa)) are extracellular. N-linked (GlcNAc...) asparagine glycosylation occurs at asparagine 46. A disulfide bridge connects residues cysteine 56 and cysteine 66. An N-linked (GlcNAc...) asparagine glycan is attached at asparagine 73. Cysteine 97 and cysteine 108 are joined by a disulfide. Asparagine 111 carries an N-linked (GlcNAc...) asparagine glycan. Cysteine 122 and cysteine 136 are joined by a disulfide. The Fibronectin type-III domain maps to 147–250 (PPVGLNWTLL…EVLLITFPQM (104 aa)). N-linked (GlcNAc...) asparagine glycosylation is found at asparagine 152, asparagine 157, and asparagine 196. Residues 236-240 (YGKFS) carry the WSXWS motif motif. Residues 261-284 (FPWFLIIMFGILGLAVTLFLLIFS) form a helical membrane-spanning segment. Over 285-634 (KQQRIKMLIL…STDQLNKIMP (350 aa)) the chain is Cytoplasmic. The segment at 290 to 375 (KMLILPPVPV…HEKSLNIFGA (86 aa)) is required for JAK2 binding. The short motif at 293–301 (ILPPVPVPK) is the Box 1 motif element. Positions 336–345 (DSWVEFIELD) match the UbE motif motif. Serine 337 carries the post-translational modification Phosphoserine. Tyrosine 483 and tyrosine 591 each carry phosphotyrosine.

Belongs to the type I cytokine receptor family. Type 1 subfamily. As to quaternary structure, on growth hormone (GH) binding, forms homodimers and binds JAK2 via a box 1-containing domain. In terms of processing, the soluble form (GHBP) is produced by phorbol ester-promoted proteolytic cleavage at the cell surface (shedding) by ADAM17/TACE. Shedding is inhibited by growth hormone (GH) binding to the receptor probably due to a conformational change in GHR rendering the receptor inaccessible to ADAM17. On GH binding, phosphorylated on tyrosine residues in the cytoplasmic domain by JAK2. Post-translationally, ubiquitinated by the ECS(SOCS2) complex following ligand-binding and phosphorylation by JAK2, leading to its degradation by the proteasome. Regulation by the ECS(SOCS2) complex acts as a negative feedback loop of growth hormone receptor signaling. Ubiquitination is not sufficient for GHR internalization.

It localises to the cell membrane. The protein resides in the secreted. Its function is as follows. Receptor for pituitary gland growth hormone (GH1) involved in regulating postnatal body growth. On ligand binding, couples to the JAK2/STAT5 pathway. In terms of biological role, the soluble form (GHBP) acts as a reservoir of growth hormone in plasma and may be a modulator/inhibitor of GH signaling. The protein is Growth hormone receptor (GHR) of Bos indicus (Zebu).